The primary structure comprises 66 residues: Large ribosomal subunit protein bL35 (66 aa).

The tract at residues 25–45 (QAAGKRHGMSKRPQKMKRNAR) is disordered. Over residues 28–44 (GKRHGMSKRPQKMKRNA) the composition is skewed to basic residues.

The protein belongs to the bacterial ribosomal protein bL35 family.

The sequence is that of Large ribosomal subunit protein bL35 from Rhodospirillum centenum (strain ATCC 51521 / SW).